A 5430-amino-acid chain; its full sequence is Microtubule-actin cross-linking factor 1 (5430 aa).

Positions 1–47 are disordered; that stretch reads MSSSDEETLSERSCRSERSCRSERSYRSERSGSLSPCPPGDTLPWNL. The actin-binding stretch occupies residues 1-295; the sequence is MSSSDEETLS…VITYVSSIYD (295 aa). Ser4 carries the phosphoserine modification. Residues 9–30 show a composition bias toward basic and acidic residues; sequence LSERSCRSERSCRSERSYRSER. 2 positions are modified to phosphoserine: Ser35 and Ser57. Calponin-homology (CH) domains lie at 78–181 and 194–298; these read RVQK…LHFQ and MSAK…DAFP. LRR repeat units follow at residues 148–171 and 240–264; these read QRQV…LTLG and LVDM…VAER. Residue Ser280 is modified to Phosphoserine. 2 LRR repeats span residues 377–399 and 441–464; these read LYKL…YHPN and LNCE…LESG. In terms of domain architecture, SH3 spans 868-925; that stretch reads KSTLSVKAICDYRQIEITICKNDECVLEDNSQRTKWKVISPTGNEAMVPSVCLLIPPP. The stretch at 1050 to 1073 is one LRR 5 repeat; the sequence is ISELKNIRLRLEECEQRLLKQIQS. The residue at position 1122 (Ser1122) is a Phosphoserine. LRR repeat units follow at residues 1128–1154, 1187–1210, and 1257–1282; these read ATTL…VCLN, PADL…VKDK, and HRVI…DYRA. A phosphoserine mark is found at Ser1367 and Ser1376. LRR repeat units follow at residues 1579–1602 and 1629–1653; these read QQEL…IQNH and LTAL…TREA. 2 Spectrin repeats span residues 1816-1891 and 1933-2041; these read ELQK…NFEE and QYQQ…ALLQ. The residue at position 1860 (Ser1860) is a Phosphoserine. One copy of the LRR 11 repeat lies at 1869-1891; it reads KGDLRFVTISGQKVLETENNFEE. LRR repeat units lie at residues 2058–2083 and 2194–2220; these read LQSM…LIQE and IQEL…ALGS. Residues 2399-2507 form a Spectrin 3 repeat; the sequence is RMEEVQKEAS…TVARQKQLEE (109 aa). 2 positions are modified to phosphoserine: Ser2429 and Ser2454. LRR repeat units follow at residues 2444–2467, 2534–2557, and 2702–2725; these read KAFL…LAGL, GVLG…QFML, and KKRL…RMNR. 2 Spectrin repeats span residues 2733–2837 and 2842–2945; these read TQQF…SRLK and KAQK…SLEE. 2 positions are modified to phosphoserine: Ser2769 and Ser2895. LRR repeat units follow at residues 2984–3009, 3105–3127, and 3214–3237; these read NKNL…YLRD, NKIQ…MLEE, and KEQV…LIQS. 13 Spectrin repeats span residues 3169 to 3274, 3281 to 3383, 3388 to 3491, 3714 to 3818, 3825 to 3927, 4047 to 4152, 4157 to 4261, 4267 to 4370, 4375 to 4481, 4486 to 4589, 4594 to 4700, 4707 to 4808, and 4812 to 4916; these read EDFY…QLQE, KFQD…QLED, AKQF…SLLE, RSQQ…ARLE, NQFW…ALDE, LAEK…KLED, AVQY…HKLE, LGQF…QQLQ, QAQG…KLEE, ATEF…RSLD, RAKQ…KLEE, QFMD…RLEQ, and QAEE…QRLE. At Thr3368 the chain carries Phosphothreonine. 2 LRR repeats span residues 3737–3761 and 3846–3870; these read MALG…AFSI and AQLP…QLRE. Ser4074 carries the phosphoserine modification. Residue Lys4252 is modified to N6-acetyllysine. The stretch at 4538-4561 is one LRR 22 repeat; the sequence is RDQIIELDQTGNQLKFLSQKQDVV. Residues 4993 to 5023 form a disordered region; sequence PTHAPFIEKSRSGSRKSLNQPTPPPMPILSQ. Residue Ser5009 is modified to Phosphoserine. EF-hand domains lie at 5083 to 5118 and 5119 to 5154; these read HKKS…SKFP and TTKL…NKDA. 10 residues coordinate Ca(2+): Asp5096, Asp5098, Asp5100, Lys5102, Glu5107, Asp5132, Asp5134, Asp5136, Tyr5138, and Glu5143. The region spanning 5159–5231 is the GAR domain; it reads TDADKIEDEV…EFLVKNDPCR (73 aa). The segment at 5159 to 5430 is C-terminal tail; the sequence is TDADKIEDEV…ASPRTPCPKR (272 aa). Residues 5247–5430 are disordered; sequence PEGASQGMTP…ASPRTPCPKR (184 aa). Positions 5267 to 5301 are enriched in low complexity; it reads SSRAASPTRSSSSASQSNHSCTSMPSSPATPASGT. A Phosphothreonine modification is found at Thr5296. Residues 5317 to 5341 show a composition bias toward polar residues; sequence TFHSSRTSLAGDTSNSSSPASTGAK. Residues Ser5321 and Ser5334 each carry the phosphoserine modification. Low complexity predominate over residues 5352–5366; it reads SRPGSRAGSRAGSRA. The tract at residues 5355–5370 is 4 X 4 AA tandem repeats of [GS]-S-R-[AR]; the sequence is GSRAGSRAGSRASSRR. 2 positions are modified to phosphoserine: Ser5372 and Ser5375. The segment covering 5381–5391 has biased composition (polar residues); it reads ETQSACSDTSE. A compositionally biased stretch (low complexity) spans 5392–5403; it reads SSAAGGQGSSRR.

The protein belongs to the plakin or cytolinker family. In terms of assembly, interacts with MAPRE1, CLASP1, CLASP2 and GOLGA4. Interacts with AXIN1 and LRP6. Found in a complex composed of MACF1, APC; AXIN1, CTNNB1 and GSK3B. Interacts with CAMSAP3. Post-translationally, phosphorylated on serine residues in the C-terminal tail by GSK3B. Phosphorylation inhibits microtubule-binding and this plays a critical role in bulge stem cell migration and skin wound repair. Wnt-signaling can repress phosphorylation.

Its subcellular location is the cytoplasm. The protein localises to the cytoskeleton. It is found in the golgi apparatus. It localises to the cell membrane. The protein resides in the cell projection. Its subcellular location is the ruffle membrane. The protein localises to the membrane. Functionally, F-actin-binding protein which plays a role in cross-linking actin to other cytoskeletal proteins and also binds to microtubules. Plays an important role in ERBB2-dependent stabilization of microtubules at the cell cortex. Acts as a positive regulator of Wnt receptor signaling pathway and is involved in the translocation of AXIN1 and its associated complex (composed of APC, CTNNB1 and GSK3B) from the cytoplasm to the cell membrane. Has actin-regulated ATPase activity and is essential for controlling focal adhesions (FAs) assembly and dynamics. Interaction with CAMSAP3 at the minus ends of non-centrosomal microtubules tethers microtubules minus-ends to actin filaments, regulating focal adhesion size and cell migration. May play role in delivery of transport vesicles containing GPI-linked proteins from the trans-Golgi network through its interaction with GOLGA4. Plays a key role in wound healing and epidermal cell migration. Required for efficient upward migration of bulge cells in response to wounding and this function is primarily rooted in its ability to coordinate microtubule dynamics and polarize hair follicle stem cells. As a regulator of actin and microtubule arrangement and stabilization, it plays an essential role in neurite outgrowth, branching and spine formation during brain development. In Rattus norvegicus (Rat), this protein is Microtubule-actin cross-linking factor 1.